The following is a 678-amino-acid chain: Glycine--tRNA ligase beta subunit (678 aa).

This sequence belongs to the class-II aminoacyl-tRNA synthetase family. In terms of assembly, tetramer of two alpha and two beta subunits.

It is found in the cytoplasm. It catalyses the reaction tRNA(Gly) + glycine + ATP = glycyl-tRNA(Gly) + AMP + diphosphate. This Sulfurihydrogenibium sp. (strain YO3AOP1) protein is Glycine--tRNA ligase beta subunit.